We begin with the raw amino-acid sequence, 624 residues long: Sodium/potassium/calcium exchanger 3 (624 aa).

The first 25 residues, 1–25, serve as a signal peptide directing secretion; that stretch reads RDLLLSQLCFLASVALLLWSLSSLR. The Extracellular segment spans residues 26–88; sequence EQKELDLMDL…DIFSNEDRRQ (63 aa). N-linked (GlcNAc...) asparagine glycans are attached at residues N52 and N67. Residues 89-109 form a helical membrane-spanning segment; it reads GAVVLHVLCAMYMFYALAIVC. Residues 110 to 133 lie on the Cytoplasmic side of the membrane; the sequence is DDFFVPSLEKICERLHLSEDVAGA. The stretch at 130–170 is one Alpha-1 repeat; the sequence is VAGATFMAAGSSAPELFTSVIGVFITKGDVGVGTIVGSAVF. Residues 134 to 154 form a helical membrane-spanning segment; it reads TFMAAGSSAPELFTSVIGVFI. Residues 155-163 lie on the Extracellular side of the membrane; that stretch reads TKGDVGVGT. Residues 164-184 form a helical membrane-spanning segment; sequence IVGSAVFNILCIIGVCGLFAG. The Cytoplasmic portion of the chain corresponds to 185–191; sequence QVVALSS. The chain crosses the membrane as a helical span at residues 192–212; it reads WCLLRDSIYYTLSVVALIVFI. Topologically, residues 213–215 are extracellular; the sequence is YDE. The helical transmembrane segment at 216–236 threads the bilayer; that stretch reads KVSWWESLVLVLMYLIYIIIM. The Cytoplasmic segment spans residues 237-465; it reads KYNACIHQCF…WFMVTFASST (229 aa). Residue S289 is modified to Phosphoserine. Residues 386–414 show a composition bias toward acidic residues; sequence AEADNETENENEDENNENDEEEDEDDDEG. Residues 386-421 are disordered; the sequence is AEADNETENENEDENNENDEEEDEDDDEGPYTPFDP. The chain crosses the membrane as a helical span at residues 466 to 486; sequence LWIAAFSYMMVWMVTIIGYTL. Residues 487-491 are Extracellular-facing; that stretch reads GIPDV. The helical transmembrane segment at 492–512 threads the bilayer; sequence IMGITFLAAGTSVPDCMASLI. One copy of the Alpha-2 repeat lies at 499–530; sequence AAGTSVPDCMASLIVARQGMGDMAVSNSIGSN. The Cytoplasmic segment spans residues 513–530; the sequence is VARQGMGDMAVSNSIGSN. Residues 531-551 form a helical membrane-spanning segment; sequence VFDILIGLGLPWALQTLAVDY. The Extracellular segment spans residues 552 to 561; that stretch reads GSYIRLNSRG. A helical transmembrane segment spans residues 562-582; that stretch reads LIYSVGLLLASVFVTVFGVHL. Residues 583-596 are Cytoplasmic-facing; it reads NKWQLDKKLGCGCL. Residues 597–617 traverse the membrane as a helical segment; that stretch reads FLYGVFLCFSIMTEFNVFTFV. Residues 618-624 lie on the Extracellular side of the membrane; the sequence is NLPMCGD.

Belongs to the Ca(2+):cation antiporter (CaCA) (TC 2.A.19) family. SLC24A subfamily. In terms of tissue distribution, abundant in the brain. Expressed at low levels in the aorta, uterus and intestine.

Its subcellular location is the cell membrane. It catalyses the reaction Ca(2+)(out) + K(+)(out) + 4 Na(+)(in) = Ca(2+)(in) + K(+)(in) + 4 Na(+)(out). Calcium, potassium:sodium antiporter that transports 1 Ca(2+) and 1 K(+) in exchange for 4 Na(+). The sequence is that of Sodium/potassium/calcium exchanger 3 (Slc24a3) from Rattus norvegicus (Rat).